The following is a 492-amino-acid chain: N-succinylglutamate 5-semialdehyde dehydrogenase (492 aa).

An NAD(+)-binding site is contributed by 220-225 (GSANTG). Catalysis depends on residues E243 and C277.

The protein belongs to the aldehyde dehydrogenase family. AstD subfamily.

The enzyme catalyses N-succinyl-L-glutamate 5-semialdehyde + NAD(+) + H2O = N-succinyl-L-glutamate + NADH + 2 H(+). It participates in amino-acid degradation; L-arginine degradation via AST pathway; L-glutamate and succinate from L-arginine: step 4/5. Catalyzes the NAD-dependent reduction of succinylglutamate semialdehyde into succinylglutamate. This Shigella flexneri serotype 5b (strain 8401) protein is N-succinylglutamate 5-semialdehyde dehydrogenase.